The following is a 151-amino-acid chain: 3-hydroxyacyl-[acyl-carrier-protein] dehydratase FabZ (151 aa).

Residue histidine 54 is part of the active site.

This sequence belongs to the thioester dehydratase family. FabZ subfamily.

The protein resides in the cytoplasm. The catalysed reaction is a (3R)-hydroxyacyl-[ACP] = a (2E)-enoyl-[ACP] + H2O. Involved in unsaturated fatty acids biosynthesis. Catalyzes the dehydration of short chain beta-hydroxyacyl-ACPs and long chain saturated and unsaturated beta-hydroxyacyl-ACPs. The sequence is that of 3-hydroxyacyl-[acyl-carrier-protein] dehydratase FabZ from Pectobacterium atrosepticum (strain SCRI 1043 / ATCC BAA-672) (Erwinia carotovora subsp. atroseptica).